A 195-amino-acid polypeptide reads, in one-letter code: Shikimate kinase (195 aa).

26 to 31 provides a ligand contact to ATP; the sequence is GSGKST. Mg(2+) is bound at residue serine 30. The substrate site is built by aspartate 48, arginine 72, and glycine 94. Residue arginine 132 participates in ATP binding. A substrate-binding site is contributed by arginine 151.

This sequence belongs to the shikimate kinase family. As to quaternary structure, monomer. Requires Mg(2+) as cofactor.

The protein localises to the cytoplasm. It carries out the reaction shikimate + ATP = 3-phosphoshikimate + ADP + H(+). It functions in the pathway metabolic intermediate biosynthesis; chorismate biosynthesis; chorismate from D-erythrose 4-phosphate and phosphoenolpyruvate: step 5/7. Catalyzes the specific phosphorylation of the 3-hydroxyl group of shikimic acid using ATP as a cosubstrate. The protein is Shikimate kinase of Synechococcus sp. (strain RCC307).